Reading from the N-terminus, the 87-residue chain is Small ribosomal subunit protein bS20 (87 aa).

The protein belongs to the bacterial ribosomal protein bS20 family.

Binds directly to 16S ribosomal RNA. This Corynebacterium diphtheriae (strain ATCC 700971 / NCTC 13129 / Biotype gravis) protein is Small ribosomal subunit protein bS20.